The primary structure comprises 158 residues: S-ribosylhomocysteine lyase (158 aa).

Fe cation contacts are provided by His-57, His-61, and Cys-125.

This sequence belongs to the LuxS family. Homodimer. Requires Fe cation as cofactor.

The catalysed reaction is S-(5-deoxy-D-ribos-5-yl)-L-homocysteine = (S)-4,5-dihydroxypentane-2,3-dione + L-homocysteine. Involved in the synthesis of autoinducer 2 (AI-2) which is secreted by bacteria and is used to communicate both the cell density and the metabolic potential of the environment. The regulation of gene expression in response to changes in cell density is called quorum sensing. Catalyzes the transformation of S-ribosylhomocysteine (RHC) to homocysteine (HC) and 4,5-dihydroxy-2,3-pentadione (DPD). This chain is S-ribosylhomocysteine lyase, found in Deinococcus radiodurans (strain ATCC 13939 / DSM 20539 / JCM 16871 / CCUG 27074 / LMG 4051 / NBRC 15346 / NCIMB 9279 / VKM B-1422 / R1).